A 305-amino-acid polypeptide reads, in one-letter code: tRNA dimethylallyltransferase (305 aa).

9–16 (GPTASGKT) contacts ATP. 11 to 16 (TASGKT) is a binding site for substrate. Interaction with substrate tRNA stretches follow at residues 34-37 (DSAL), 158-162 (QRLSR), and 239-244 (RCVGYR).

This sequence belongs to the IPP transferase family. As to quaternary structure, monomer. The cofactor is Mg(2+).

It catalyses the reaction adenosine(37) in tRNA + dimethylallyl diphosphate = N(6)-dimethylallyladenosine(37) in tRNA + diphosphate. Functionally, catalyzes the transfer of a dimethylallyl group onto the adenine at position 37 in tRNAs that read codons beginning with uridine, leading to the formation of N6-(dimethylallyl)adenosine (i(6)A). This is tRNA dimethylallyltransferase from Aeromonas hydrophila subsp. hydrophila (strain ATCC 7966 / DSM 30187 / BCRC 13018 / CCUG 14551 / JCM 1027 / KCTC 2358 / NCIMB 9240 / NCTC 8049).